Reading from the N-terminus, the 149-residue chain is Transcription factor bHLH153 (149 aa).

The bHLH domain occupies 27–76 (RHKSDLSFSSKERKDKVGERISALQQIVSPYGKTDTASVLLDAMHYIEFL).

This sequence belongs to the bHLH protein family.

The protein resides in the nucleus. The polypeptide is Transcription factor bHLH153 (Arabidopsis thaliana (Mouse-ear cress)).